Reading from the N-terminus, the 256-residue chain is Thiazole synthase (256 aa).

Catalysis depends on Lys96, which acts as the Schiff-base intermediate with DXP. 1-deoxy-D-xylulose 5-phosphate-binding positions include Gly157, 183–184 (AG), and 205–206 (NT).

Belongs to the ThiG family. Homotetramer. Forms heterodimers with either ThiH or ThiS.

It is found in the cytoplasm. It carries out the reaction [ThiS sulfur-carrier protein]-C-terminal-Gly-aminoethanethioate + 2-iminoacetate + 1-deoxy-D-xylulose 5-phosphate = [ThiS sulfur-carrier protein]-C-terminal Gly-Gly + 2-[(2R,5Z)-2-carboxy-4-methylthiazol-5(2H)-ylidene]ethyl phosphate + 2 H2O + H(+). The protein operates within cofactor biosynthesis; thiamine diphosphate biosynthesis. Catalyzes the rearrangement of 1-deoxy-D-xylulose 5-phosphate (DXP) to produce the thiazole phosphate moiety of thiamine. Sulfur is provided by the thiocarboxylate moiety of the carrier protein ThiS. In vitro, sulfur can be provided by H(2)S. The protein is Thiazole synthase of Bacillus anthracis.